We begin with the raw amino-acid sequence, 692 residues long: SH3 domain-containing protein 21 (692 aa).

Residues 1–60 (MVQSELQLQPRAGGRAEAASWGDRGNDKGGFGNPDMPSVSPGPQRPPKLSSLAYDSPPDY) form a disordered region. The region spanning 65–126 (SHPEAYRVLF…PDNFVLPPPP (62 aa)) is the SH3 domain. 3 disordered regions span residues 132-501 (PRKV…EVLP), 536-605 (PKGG…SQET), and 672-692 (VMQG…TQTY). Over residues 177-186 (PSRDSQKLTS) the composition is skewed to basic and acidic residues. Positions 210-220 (TQTPQQRSVSS) are enriched in polar residues. Basic and acidic residues-rich tracts occupy residues 378–396 (VSTR…EALQ), 490–501 (NEERLLRGEVLP), and 542–582 (SKEE…KEEV). The stretch at 628-678 (SLRGEVESLRRALELMGVQLERKLTDIWEELKSEKEQRQRLEVQVMQGTQK) forms a coiled coil. The span at 673 to 692 (MQGTQKSQTPRIIHAQTQTY) shows a compositional bias: polar residues.

The sequence is that of SH3 domain-containing protein 21 (SH3D21) from Macaca fascicularis (Crab-eating macaque).